The primary structure comprises 528 residues: UDP-glucuronosyltransferase 2B10 (528 aa).

The first 23 residues, 1-23, serve as a signal peptide directing secretion; that stretch reads MALKWTTVLLIQLSFYFSSGSCG. Asn66 carries N-linked (GlcNAc...) asparagine glycosylation. Lys134 carries the post-translational modification N6-succinyllysine. Asn314 and Asn481 each carry an N-linked (GlcNAc...) asparagine glycan. The helical transmembrane segment at 492-512 threads the bilayer; it reads VIGFLLACVATVLFIITKCCL.

The protein belongs to the UDP-glycosyltransferase family.

The protein localises to the microsome membrane. The protein resides in the endoplasmic reticulum membrane. The catalysed reaction is glucuronate acceptor + UDP-alpha-D-glucuronate = acceptor beta-D-glucuronoside + UDP + H(+). UDPGT is of major importance in the conjugation and subsequent elimination of potentially toxic xenobiotics and endogenous compounds. This Homo sapiens (Human) protein is UDP-glucuronosyltransferase 2B10 (UGT2B10).